Here is a 283-residue protein sequence, read N- to C-terminus: Phosphate import ATP-binding protein PstB (283 aa).

Residues 1-20 (MAQTLAQTKQISQSHTFDVS) are compositionally biased toward polar residues. The segment at 1 to 33 (MAQTLAQTKQISQSHTFDVSQSHHKTPNDTNSH) is disordered. The region spanning 37 to 278 (YSTQNLDLWY…PSNKKTEDYI (242 aa)) is the ABC transporter domain. Position 69 to 76 (69 to 76 (GPSGCGKS)) interacts with ATP.

It belongs to the ABC transporter superfamily. Phosphate importer (TC 3.A.1.7) family. The complex is composed of two ATP-binding proteins (PstB), two transmembrane proteins (PstC and PstA) and a solute-binding protein (PstS).

Its subcellular location is the cell membrane. It catalyses the reaction phosphate(out) + ATP + H2O = ADP + 2 phosphate(in) + H(+). Its function is as follows. Part of the ABC transporter complex PstSACB involved in phosphate import. Responsible for energy coupling to the transport system. This chain is Phosphate import ATP-binding protein PstB, found in Staphylococcus aureus (strain bovine RF122 / ET3-1).